The sequence spans 278 residues: Serine/arginine-rich splicing factor SR34B (278 aa).

The 76-residue stretch at 7–82 (RTIYVGNLPG…HHLRVELAHG (76 aa)) folds into the RRM 1 domain. A compositionally biased stretch (basic and acidic residues) spans 81-91 (HGGRRSSHDAR). Disordered stretches follow at residues 81–121 (HGGR…SEYR) and 192–263 (EYDS…RSLS). Residues 95-107 (SGRGRGGRGGGDG) are compositionally biased toward gly residues. 2 stretches are compositionally biased toward basic and acidic residues: residues 108 to 120 (GGRERGPSRRSEY) and 192 to 201 (EYDSRRDSRS). The RRM 2 domain maps to 120–195 (YRVVVSGLPS…EYVRVREYDS (76 aa)). A phosphoserine mark is found at Ser201, Ser203, Ser225, Ser231, Ser233, Ser242, Ser250, Ser259, and Ser263. Over residues 207-243 (SYSKSRSRGRSPSRSRSRSRSRSKSRSPKAKSLRRSP) the composition is skewed to basic residues.

This sequence belongs to the splicing factor SR family. SR subfamily. As to quaternary structure, component of the spliceosome.

The protein localises to the nucleus speckle. Its subcellular location is the nucleus. It is found in the nucleoplasm. In terms of biological role, probably involved in intron recognition and spliceosome assembly. This Arabidopsis thaliana (Mouse-ear cress) protein is Serine/arginine-rich splicing factor SR34B (SR34B).